The primary structure comprises 548 residues: Glucose-6-phosphate isomerase (548 aa).

The Proton donor role is filled by Glu-355. Residues His-386 and Lys-514 contribute to the active site.

The protein belongs to the GPI family.

The protein resides in the cytoplasm. The enzyme catalyses alpha-D-glucose 6-phosphate = beta-D-fructose 6-phosphate. It functions in the pathway carbohydrate biosynthesis; gluconeogenesis. Its pathway is carbohydrate degradation; glycolysis; D-glyceraldehyde 3-phosphate and glycerone phosphate from D-glucose: step 2/4. In terms of biological role, catalyzes the reversible isomerization of glucose-6-phosphate to fructose-6-phosphate. This is Glucose-6-phosphate isomerase from Hamiltonella defensa subsp. Acyrthosiphon pisum (strain 5AT).